The primary structure comprises 197 residues: Recombination protein RecR (197 aa).

A C4-type zinc finger spans residues Cys56 to Cys71. The region spanning Asp79–Pro174 is the Toprim domain.

It belongs to the RecR family.

In terms of biological role, may play a role in DNA repair. It seems to be involved in an RecBC-independent recombinational process of DNA repair. It may act with RecF and RecO. The protein is Recombination protein RecR of Hydrogenovibrio crunogenus (strain DSM 25203 / XCL-2) (Thiomicrospira crunogena).